A 108-amino-acid polypeptide reads, in one-letter code: Zinc finger protein 475 (108 aa).

2 consecutive C2HC/C3H-type zinc fingers follow at residues 6–35 (PAVV…KWHN) and 79–108 (QLVP…KAAK). Cysteine 10, cysteine 13, histidine 25, cysteine 29, cysteine 83, cysteine 86, histidine 98, and cysteine 102 together coordinate Zn(2+).

It depends on Zn(2+) as a cofactor.

The protein is Zinc finger protein 475 of Homo sapiens (Human).